The sequence spans 161 residues: Allophycocyanin alpha chain (161 aa).

At Asn71 the chain carries N4-methylasparagine. Residue Cys81 participates in (2R,3E)-phycocyanobilin binding.

Belongs to the phycobiliprotein family. In terms of assembly, heterodimer of an alpha and a beta chain. Contains one covalently linked phycocyanobilin chromophore.

It localises to the plastid. The protein localises to the chloroplast thylakoid membrane. In terms of biological role, light-harvesting photosynthetic bile pigment-protein from the phycobiliprotein complex. Allophycocyanin has a maximum absorption at approximately 650 nanometers. The sequence is that of Allophycocyanin alpha chain (apcA) from Cyanidium caldarium (Red alga).